Consider the following 601-residue polypeptide: Glutathione-regulated potassium-efflux system protein KefB (601 aa).

13 consecutive transmembrane segments (helical) span residues 4 to 24 (SDFL…VPLA), 29 to 49 (IGAV…GLGF), 55 to 75 (EILH…GLEL), 87 to 107 (IFGV…GLLM), 115 to 135 (AAVV…LQLM), 152 to 172 (VLLF…LLAG), 177 to 197 (HFDW…LIGG), 207 to 227 (FIAA…LVLG), 230 to 250 (LFMD…GVLL), 268 to 288 (GLLL…GVLY), 291 to 311 (LLWV…VLYL), 324 to 344 (MQFA…FSSA), and 356 to 376 (ALLL…MKLV). Residues 400 to 519 (KPQVIVVGFG…AGVTQFSRET (120 aa)) form the RCK N-terminal domain.

Belongs to the monovalent cation:proton antiporter 2 (CPA2) transporter (TC 2.A.37) family. KefB subfamily. Interacts with the regulatory subunit KefG.

The protein resides in the cell inner membrane. Pore-forming subunit of a potassium efflux system that confers protection against electrophiles. Catalyzes K(+)/H(+) antiport. This chain is Glutathione-regulated potassium-efflux system protein KefB, found in Escherichia coli O127:H6 (strain E2348/69 / EPEC).